Reading from the N-terminus, the 138-residue chain is Large ribosomal subunit protein uL16 (138 aa).

Residues 1–13 (MLQPARRKYRKEQ) are compositionally biased toward basic residues. The tract at residues 1-22 (MLQPARRKYRKEQKGRNTGIAT) is disordered.

The protein belongs to the universal ribosomal protein uL16 family. Part of the 50S ribosomal subunit.

Binds 23S rRNA and is also seen to make contacts with the A and possibly P site tRNAs. This Delftia acidovorans (strain DSM 14801 / SPH-1) protein is Large ribosomal subunit protein uL16.